Here is a 127-residue protein sequence, read N- to C-terminus: Protein pkiA (127 aa).

The HIT domain maps to 16 to 127 (IFAKIISGAI…GGRQMNWPPG (112 aa)).

The sequence is that of Protein pkiA (pkiA) from Dictyostelium discoideum (Social amoeba).